The following is a 376-amino-acid chain: GDSL esterase/lipase 2 (376 aa).

The first 25 residues, 1-25 (MENSRSTLIIFFAYTTIILIGSINC), serve as a signal peptide directing secretion. Asn36 carries N-linked (GlcNAc...) asparagine glycosylation. Ser46 acts as the Nucleophile in catalysis. Residues Asn186 and Asn205 are each glycosylated (N-linked (GlcNAc...) asparagine). Active-site residues include Asp340 and His343. Asn362 is a glycosylation site (N-linked (GlcNAc...) asparagine).

This sequence belongs to the 'GDSL' lipolytic enzyme family. In terms of tissue distribution, expressed seedlings, roots and stems.

Its subcellular location is the secreted. Functionally, involved in the resistance to the necrotropic bacteria Erwinia carotovora, probably via negative regulation of auxin signaling. Possesses lipase and antimicrobial activities, inhibiting germination of fungal spores (e.g. Alternaria brassicicola). This is GDSL esterase/lipase 2 (GLIP2) from Arabidopsis thaliana (Mouse-ear cress).